The primary structure comprises 382 residues: DNA replication and repair protein RecF (382 aa).

30–37 (GPNGHGKS) lines the ATP pocket.

Belongs to the RecF family.

The protein localises to the cytoplasm. In terms of biological role, the RecF protein is involved in DNA metabolism; it is required for DNA replication and normal SOS inducibility. RecF binds preferentially to single-stranded, linear DNA. It also seems to bind ATP. In Magnetococcus marinus (strain ATCC BAA-1437 / JCM 17883 / MC-1), this protein is DNA replication and repair protein RecF.